Consider the following 269-residue polypeptide: Ribonuclease HII (269 aa).

An RNase H type-2 domain is found at 83–269 (YLIAGVDEVG…HRMSFLTNIL (187 aa)). D89, E90, and D185 together coordinate a divalent metal cation.

The protein belongs to the RNase HII family. Mn(2+) serves as cofactor. It depends on Mg(2+) as a cofactor.

It localises to the cytoplasm. It carries out the reaction Endonucleolytic cleavage to 5'-phosphomonoester.. In terms of biological role, endonuclease that specifically degrades the RNA of RNA-DNA hybrids. This chain is Ribonuclease HII, found in Clostridium botulinum (strain Langeland / NCTC 10281 / Type F).